The sequence spans 208 residues: U11/U12 small nuclear ribonucleoprotein 35 kDa protein (208 aa).

The RRM domain maps to L50–E128. A disordered region spans residues G133–Y208. Residues R171 to Y208 are compositionally biased toward basic and acidic residues.

The protein resides in the nucleus. The polypeptide is U11/U12 small nuclear ribonucleoprotein 35 kDa protein (snrnp35) (Danio rerio (Zebrafish)).